Consider the following 131-residue polypeptide: Large ribosomal subunit protein bL12 (131 aa).

It belongs to the bacterial ribosomal protein bL12 family. Homodimer. Part of the ribosomal stalk of the 50S ribosomal subunit. Forms a multimeric L10(L12)X complex, where L10 forms an elongated spine to which 2 to 4 L12 dimers bind in a sequential fashion. Binds GTP-bound translation factors.

In terms of biological role, forms part of the ribosomal stalk which helps the ribosome interact with GTP-bound translation factors. Is thus essential for accurate translation. In Prochlorococcus marinus subsp. pastoris (strain CCMP1986 / NIES-2087 / MED4), this protein is Large ribosomal subunit protein bL12.